We begin with the raw amino-acid sequence, 340 residues long: Farnesyl pyrophosphate synthase 1 (340 aa).

K47, R50, and Q85 together coordinate isopentenyl diphosphate. D92 and D96 together coordinate Mg(2+). R101 lines the dimethylallyl diphosphate pocket. R102 is a binding site for isopentenyl diphosphate. Positions 188, 189, 227, 244, and 253 each coordinate dimethylallyl diphosphate.

Belongs to the FPP/GGPP synthase family. The cofactor is Mg(2+). Mainly expressed in trichomes and flowers, and, to a lower extent, in leaves, roots and stems.

It localises to the cytoplasm. The protein localises to the nucleus. It catalyses the reaction isopentenyl diphosphate + dimethylallyl diphosphate = (2E)-geranyl diphosphate + diphosphate. It carries out the reaction isopentenyl diphosphate + (2E)-geranyl diphosphate = (2E,6E)-farnesyl diphosphate + diphosphate. The protein operates within isoprenoid biosynthesis; farnesyl diphosphate biosynthesis; farnesyl diphosphate from geranyl diphosphate and isopentenyl diphosphate: step 1/1. It functions in the pathway sesquiterpene biosynthesis. It participates in isoprenoid biosynthesis; geranyl diphosphate biosynthesis; geranyl diphosphate from dimethylallyl diphosphate and isopentenyl diphosphate: step 1/1. Its function is as follows. Catalyzes the sequential condensation of isopentenyl pyrophosphate with the allylic pyrophosphates, dimethylallyl pyrophosphate, and then with the resultant geranylpyrophosphate to the ultimate product farnesyl pyrophosphate. In Cannabis sativa (Hemp), this protein is Farnesyl pyrophosphate synthase 1.